The sequence spans 150 residues: Mediator of RNA polymerase II transcription subunit 22a (150 aa).

Positions serine 99 to aspartate 127 form a coiled coil.

It belongs to the Mediator complex subunit 22 family. Component of the Mediator complex.

Its subcellular location is the nucleus. Component of the Mediator complex, a coactivator involved in the regulated transcription of nearly all RNA polymerase II-dependent genes. Mediator functions as a bridge to convey information from gene-specific regulatory proteins to the basal RNA polymerase II transcription machinery. The Mediator complex, having a compact conformation in its free form, is recruited to promoters by direct interactions with regulatory proteins and serves for the assembly of a functional preinitiation complex with RNA polymerase II and the general transcription factors. The polypeptide is Mediator of RNA polymerase II transcription subunit 22a (MED22A) (Arabidopsis thaliana (Mouse-ear cress)).